The sequence spans 427 residues: MSRSETLFNNAQKHIPGGVNSPVRAFKSVGGTPLFFKHAEGAYVLDEDDKRYVDYVGSWGPMILGHSHPDVLDAVRRQLDHGLSYGAPTALEVEMADLVCSMVPSMEMVRMVSSGTEATMSAIRLARGYTGRDSIIKFEGCYHGHSDSLLVKAGSGALTFGVPNSPGVPAAFAKHTLTLPFNDIEAVRKTLGEVGKEVACIIVEPVAGNMNCVPPAPGFLEGLREACDEHGVVLIFDEVMTGFRVALGGAQAYYGVTPDLSTFGKIIGGGMPVGAFGGKREIMQQISPLGPVYQAGTLSGNPLAMAAGLTTLRLISRPGFHDELTAYTTRMLDGLQQRADAAGIPFVTTQAGGMFGLYFSGADAIVTFEDVMASDVERFKRFFHLMLDGGVYLAPSAFEAGFTSIAHGDKELEITLNAAEKAFAALK.

Residue Lys265 is modified to N6-(pyridoxal phosphate)lysine.

This sequence belongs to the class-III pyridoxal-phosphate-dependent aminotransferase family. HemL subfamily. As to quaternary structure, homodimer. Pyridoxal 5'-phosphate is required as a cofactor.

The protein resides in the cytoplasm. It catalyses the reaction (S)-4-amino-5-oxopentanoate = 5-aminolevulinate. It participates in porphyrin-containing compound metabolism; protoporphyrin-IX biosynthesis; 5-aminolevulinate from L-glutamyl-tRNA(Glu): step 2/2. This chain is Glutamate-1-semialdehyde 2,1-aminomutase, found in Pseudomonas aeruginosa (strain LESB58).